The primary structure comprises 248 residues: 2,3-bisphosphoglycerate-dependent phosphoglycerate mutase (248 aa).

Residues 8 to 15 (RHGESTWN), 21 to 22 (TG), Arg60, 87 to 90 (ERHY), Lys98, 114 to 115 (RR), and 183 to 184 (GN) each bind substrate. His9 acts as the Tele-phosphohistidine intermediate in catalysis. Glu87 serves as the catalytic Proton donor/acceptor.

Belongs to the phosphoglycerate mutase family. BPG-dependent PGAM subfamily. As to quaternary structure, homodimer.

The enzyme catalyses (2R)-2-phosphoglycerate = (2R)-3-phosphoglycerate. It functions in the pathway carbohydrate degradation; glycolysis; pyruvate from D-glyceraldehyde 3-phosphate: step 3/5. Catalyzes the interconversion of 2-phosphoglycerate and 3-phosphoglycerate. This Paraburkholderia phymatum (strain DSM 17167 / CIP 108236 / LMG 21445 / STM815) (Burkholderia phymatum) protein is 2,3-bisphosphoglycerate-dependent phosphoglycerate mutase.